The primary structure comprises 357 residues: Non-structural protein NS2 (357 aa).

Disordered stretches follow at residues 162–199 and 228–268; these read QNERESAPRLQVQSVSPREESRWMDDDEAKVDEEAKEM and LDEK…KTHI. 2 stretches are compositionally biased toward acidic residues: residues 230–243 and 250–260; these read EKDEEDRDEREDEE and DDDEQGEDASD.

Belongs to the orbivirus non-structural protein NS2 family.

In terms of biological role, single-stranded RNA-binding protein. The chain is Non-structural protein NS2 (Segment-8) from Antilocapra americana (Pronghorn).